The chain runs to 100 residues: Putative septation protein SpoVG (100 aa).

It belongs to the SpoVG family.

Functionally, could be involved in septation. In Staphylococcus aureus (strain MRSA252), this protein is Putative septation protein SpoVG.